A 298-amino-acid polypeptide reads, in one-letter code: Release factor glutamine methyltransferase (298 aa).

Residues 131–135 (GTGTG), Asp162, Trp189, and Asn205 each bind S-adenosyl-L-methionine. A substrate-binding site is contributed by 205 to 208 (NPPY).

It belongs to the protein N5-glutamine methyltransferase family. PrmC subfamily.

The enzyme catalyses L-glutaminyl-[peptide chain release factor] + S-adenosyl-L-methionine = N(5)-methyl-L-glutaminyl-[peptide chain release factor] + S-adenosyl-L-homocysteine + H(+). Functionally, methylates the class 1 translation termination release factors RF1/PrfA and RF2/PrfB on the glutamine residue of the universally conserved GGQ motif. The protein is Release factor glutamine methyltransferase of Pasteurella multocida (strain Pm70).